The primary structure comprises 241 residues: tRNA pseudouridine synthase A (241 aa).

The Nucleophile role is filled by Asp52. Tyr111 lines the substrate pocket.

This sequence belongs to the tRNA pseudouridine synthase TruA family. Homodimer.

It catalyses the reaction uridine(38/39/40) in tRNA = pseudouridine(38/39/40) in tRNA. In terms of biological role, formation of pseudouridine at positions 38, 39 and 40 in the anticodon stem and loop of transfer RNAs. The protein is tRNA pseudouridine synthase A of Ureaplasma urealyticum serovar 10 (strain ATCC 33699 / Western).